Consider the following 634-residue polypeptide: Probable threonine--tRNA ligase, cytoplasmic (634 aa).

Positions 1-61 constitute a TGS domain; the sequence is MSIYVTFKGQ…NENQKIELYD (61 aa).

This sequence belongs to the class-II aminoacyl-tRNA synthetase family.

Its subcellular location is the cytoplasm. It carries out the reaction tRNA(Thr) + L-threonine + ATP = L-threonyl-tRNA(Thr) + AMP + diphosphate + H(+). This Enterocytozoon bieneusi (strain H348) (Microsporidian parasite) protein is Probable threonine--tRNA ligase, cytoplasmic.